The primary structure comprises 603 residues: Elongation factor 4 (603 aa).

One can recognise a tr-type G domain in the interval 7–189; it reads VRIRNFCIIA…AVVERIPPPP (183 aa). Residues 19 to 24 and 136 to 139 each bind GTP; these read DHGKST and NKID.

The protein belongs to the TRAFAC class translation factor GTPase superfamily. Classic translation factor GTPase family. LepA subfamily.

It localises to the cell inner membrane. It catalyses the reaction GTP + H2O = GDP + phosphate + H(+). Functionally, required for accurate and efficient protein synthesis under certain stress conditions. May act as a fidelity factor of the translation reaction, by catalyzing a one-codon backward translocation of tRNAs on improperly translocated ribosomes. Back-translocation proceeds from a post-translocation (POST) complex to a pre-translocation (PRE) complex, thus giving elongation factor G a second chance to translocate the tRNAs correctly. Binds to ribosomes in a GTP-dependent manner. In Nostoc punctiforme (strain ATCC 29133 / PCC 73102), this protein is Elongation factor 4.